A 379-amino-acid chain; its full sequence is Putative 2-hydroxyacid dehydrogenase YGL185C (379 aa).

Residues Ser-207–Ile-208, Leu-291–Arg-293, and Asp-317 contribute to the NAD(+) site. Arg-293 is a catalytic residue. The active site involves Glu-322. The Proton donor role is filled by His-341. NAD(+) is bound at residue His-341–Ser-344.

This sequence belongs to the D-isomer specific 2-hydroxyacid dehydrogenase family.

This chain is Putative 2-hydroxyacid dehydrogenase YGL185C, found in Saccharomyces cerevisiae (strain ATCC 204508 / S288c) (Baker's yeast).